Consider the following 130-residue polypeptide: Protachykinin-1 (130 aa).

The N-terminal stretch at 1–19 (MKILVAVAVFFLVSTQLSA) is a signal peptide. A propeptide spanning residues 20–56 (EEIGANDDLNYWSDWSDSDQIKEALPEPFEHILQRIA) is cleaved from the precursor. 2 positions are modified to methionine amide: Met-68 and Met-107.

This sequence belongs to the tachykinin family. In terms of processing, the substance P form is cleaved at Pro-59 by the prolyl endopeptidase FAP (seprase) activity (in vitro). Substance P is also cleaved and degraded by Angiotensin-converting enzyme (ACE) and neprilysin (MME).

It is found in the secreted. In terms of biological role, tachykinins are active peptides which excite neurons, evoke behavioral responses, are potent vasodilators and secretagogues, and contract (directly or indirectly) many smooth muscles. This chain is Protachykinin-1 (TAC1), found in Mesocricetus auratus (Golden hamster).